The chain runs to 505 residues: Protein dml1 (505 aa).

Positions 330 to 358 are disordered; the sequence is LPEDMSNHTQPVQNPEDRRTQASKGGSSK.

Belongs to the misato family.

Its subcellular location is the mitochondrion. Its function is as follows. Involved in the partitioning of the mitochondrial organelle and mitochondrial DNA (mtDNA) inheritance. This is Protein dml1 (dml1) from Aspergillus fumigatus (strain ATCC MYA-4609 / CBS 101355 / FGSC A1100 / Af293) (Neosartorya fumigata).